Reading from the N-terminus, the 145-residue chain is Mitochondrial import receptor subunit TOM20 homolog (145 aa).

Residues 1-6 (MVGRNS) lie on the Mitochondrial intermembrane side of the membrane. A helical membrane pass occupies residues 7-24 (AIAAGVCGALFIGYCIYF). Residues 25 to 145 (DRKRRSDPNF…AQSLAEDDVE (121 aa)) are Cytoplasmic-facing. Residues Lys-35, Lys-56, Lys-61, and Lys-68 each participate in a glycyl lysine isopeptide (Lys-Gly) (interchain with G-Cter in ubiquitin) cross-link. A phosphoserine mark is found at Ser-135 and Ser-138.

Belongs to the Tom20 family. Forms part of the preprotein translocase complex of the outer mitochondrial membrane (TOM complex) which consists of at least 7 different proteins (TOMM5, TOMM6, TOMM7, TOMM20, TOMM22, TOMM40 and TOMM70). Interacts with TOM22. Interacts with APEX1. Interacts with TBC1D21. Upon mitochondrial depolarization, interacts with PINK1; the interaction is required for PINK1-TOM-TIM23 supercomplex formation which is critical for PINK1 stabilization at the outer mitochondrial membrane, kinase activation and downstream mitophagy. Ubiquitinated by PRKN during mitophagy, leading to its degradation and enhancement of mitophagy. Deubiquitinated by USP30.

It localises to the mitochondrion outer membrane. In terms of biological role, central component of the receptor complex responsible for the recognition and translocation of cytosolically synthesized mitochondrial preproteins. Together with TOM22 functions as the transit peptide receptor at the surface of the mitochondrion outer membrane and facilitates the movement of preproteins into the TOM40 translocation pore. Required for the translocation across the mitochondrial outer membrane of cytochrome P450 monooxygenases. The sequence is that of Mitochondrial import receptor subunit TOM20 homolog (TOMM20) from Bos taurus (Bovine).